A 1346-amino-acid polypeptide reads, in one-letter code: DNA-directed RNA polymerase subunit beta (1346 aa).

Belongs to the RNA polymerase beta chain family. As to quaternary structure, the RNAP catalytic core consists of 2 alpha, 1 beta, 1 beta' and 1 omega subunit. When a sigma factor is associated with the core the holoenzyme is formed, which can initiate transcription.

The catalysed reaction is RNA(n) + a ribonucleoside 5'-triphosphate = RNA(n+1) + diphosphate. Its function is as follows. DNA-dependent RNA polymerase catalyzes the transcription of DNA into RNA using the four ribonucleoside triphosphates as substrates. This chain is DNA-directed RNA polymerase subunit beta, found in Psychromonas ingrahamii (strain DSM 17664 / CCUG 51855 / 37).